Here is a 174-residue protein sequence, read N- to C-terminus: Guided entry of tail-anchored proteins factor 1 (174 aa).

Over 1–8 the chain is Lumenal; it reads MSAAEADR. The chain crosses the membrane as a helical span at residues 9 to 29; that stretch reads WAWLLVLSFVFGCNVLRILLP. The Cytoplasmic portion of the chain corresponds to 30–99; that stretch reads SFSFFMSRVL…VKARTAQLAK (70 aa). Residues 39 to 94 adopt a coiled-coil conformation; it reads LQKDAEQESQMRAEIQGMKQELSTVNMMDEFARYARLERKINKMTDKLKTHVKART. Positions 39 to 97 are interaction with GET3/TRC40; it reads LQKDAEQESQMRAEIQGMKQELSTVNMMDEFARYARLERKINKMTDKLKTHVKARTAQL. Residues 100–120 traverse the membrane as a helical segment; the sequence is IKWVISVAFYILQAALMVSLI. Residues 121–148 are Lumenal-facing; the sequence is WKYYSVPVAVVPSKWITPLDRLVAFPTR. Residues 149–169 form a helical membrane-spanning segment; sequence VAGGVGITCWILVCNKVVAIV. The Cytoplasmic segment spans residues 170–174; sequence LHPFS.

This sequence belongs to the WRB/GET1 family. In terms of assembly, component of the Golgi to ER traffic (GET) complex, which is composed of GET1/WRB, CAMLG/GET2 and GET3. Within the complex, GET1 and CAMLG form a heterotetramer which is stabilized by phosphatidylinositol binding and which binds to the GET3 homodimer. Interacts with CAMLG (via C-terminus). GET3 shows a higher affinity for CAMLG than for GET1.

The protein localises to the endoplasmic reticulum membrane. Required for the post-translational delivery of tail-anchored (TA) proteins to the endoplasmic reticulum. Together with CAMLG/GET2, acts as a membrane receptor for soluble GET3/TRC40, which recognizes and selectively binds the transmembrane domain of TA proteins in the cytosol. Required to ensure correct topology and ER insertion of CAMLG. The sequence is that of Guided entry of tail-anchored proteins factor 1 from Bos taurus (Bovine).